The following is a 134-amino-acid chain: Histone-like protein Rv3852 (134 aa).

Positions 1-10 (MPDPQDRPDS) are enriched in basic and acidic residues. The interval 1–68 (MPDPQDRPDS…PAEAPVSLQQ (68 aa)) is disordered. The span at 23–48 (LPAKKAAKKAPARKTPAKKAPAKKTP) shows a compositional bias: basic residues. The helical transmembrane segment at 111-128 (PVPLIVAVTLSLLALLLI) threads the bilayer.

Homodimer in solution. Is probably able to self-associate in higher oligomers along the DNA molecules. Interacts with the N-terminal region of Wag31.

The protein localises to the cell inner membrane. With respect to regulation, can interact directly in vitro with the compound agrimophol, a phloroglucinol from the A.pilosa plant, whose extracts have been used in traditional Chinese medicine to treat pulmonary infections. Interaction with agrimophol leads to disruption of Rv3852's DNA binding function. Its function is as follows. Binds DNA in vitro. It has been proposed that Rv3852 plays a role in nucleoid organization and may function as an anchorage to tether the DNA to the membrane. However, it was later shown that it has no influence on nucleoid shape or compaction. It plays no role in virulence and only a minor role in the control of transcription, and does not appear to function as a typical nucleoid-associated protein. In terms of biological role, interacts with Wag31, an important cell shape and cell wall integrity determinant, and facilitates the localization of Wag31 to the cell poles and the cell wall, thus enabling nascent peptidoglycan synthesis. This chain is Histone-like protein Rv3852, found in Mycobacterium tuberculosis (strain ATCC 25618 / H37Rv).